The following is a 204-amino-acid chain: Recombination protein RecR (204 aa).

The C4-type zinc-finger motif lies at 58-75; the sequence is CSICQNVTDRGDDPCSIC. In terms of domain architecture, Toprim spans 83-181; that stretch reads SKICVVESPP…EVTKIARGIP (99 aa).

The protein belongs to the RecR family.

Its function is as follows. May play a role in DNA repair. It seems to be involved in an RecBC-independent recombinational process of DNA repair. It may act with RecF and RecO. This chain is Recombination protein RecR, found in Chlorobium phaeobacteroides (strain BS1).